A 707-amino-acid chain; its full sequence is MNPQQQRMAAIGTDKELSDLLDFSAMFSPPVNSGKTRPTTLGSSQFSGSGMDERGGTTSWGTSGQPSPSYDSSRGFTDSPHYSDHLNDSRLGTHEGLSPTPFMNSNLIGKTSERGSFSLYSRDSGLSGCQSSLLRQDLGLGSPAQLSSSGKPGTPYYSFSATSSRRRPLHDSVALDPLQAKKVRKVPPGLPSSVYAPSPNSDDFNRESPSYPSPKPPTSMFASTFFMQDGTHSSSDLWSSSNGMSQPGFGGILGTSTSHMSQSSSYGSLHSHDRLSYPPHSVSPTDINTSLPPMSSFHRGSTSSSPYVAASHTPPINGSDSILGTRGNAAGSSQTGDALGKALASIYSPDHTSSSFPSNPSTPVGSPSPLTAGTSQWPRAGGQAPSSPSYENSLHSLKNRVEQQLHEHLQDAMSFLKDVCEQSRMEDRLDRLDDAIHVLRNHAVGPSTSLPTSHSDIHSLLGPSHNAPIGNLNSNYGGSSLVTNSRSASMVGTHREDSVSLNGNHSVLSSTVAASNTELNHKTPESFRGGVQNQSGSVVPTEIKTENKEKDENLHEPPSSDDMKSDDESSQKDIKVSSRGRTSSTNEDEDLNPEQKIEREKERRMANNARERLRVRDINEAFKELGRMCQLHLKSEKPQTKLLILHQAVAVILSLEQQVRERNLNPKAACLKRREEEKVSAASAEPPTTLPGTHPGLSETTNPMGHL.

Residues 25-109 (AMFSPPVNSG…TPFMNSNLIG (85 aa)) form a disordered region. 2 stretches are compositionally biased toward polar residues: residues 30-48 (PVNS…QFSG) and 56-76 (GTTS…SRGF). Residues Ser47, Ser67, and Ser79 each carry the phosphoserine modification. The segment covering 81-93 (HYSDHLNDSRLGT) has biased composition (basic and acidic residues). Ser98 carries the phosphoserine modification. Lys110 participates in a covalent cross-link: Glycyl lysine isopeptide (Lys-Gly) (interchain with G-Cter in SUMO2). 2 positions are modified to phosphoserine: Ser116 and Ser124. The segment at 119–140 (LYSRDSGLSGCQSSLLRQDLGL) is leucine-zipper. 2 disordered regions span residues 140-222 (LGSP…SMFA) and 249-313 (FGGI…ASHT). A compositionally biased stretch (polar residues) spans 144 to 163 (AQLSSSGKPGTPYYSFSATS). Lys181 is covalently cross-linked (Glycyl lysine isopeptide (Lys-Gly) (interchain with G-Cter in SUMO2)). The span at 256–269 (STSHMSQSSSYGSL) shows a compositional bias: low complexity. The span at 282-306 (VSPTDINTSLPPMSSFHRGSTSSSP) shows a compositional bias: polar residues. Position 313 is a phosphothreonine (Thr313). Ser333 carries the post-translational modification Phosphoserine. Disordered regions lie at residues 349–393 (PDHT…YENS) and 521–605 (HKTP…ERRM). Positions 352–363 (TSSSFPSNPSTP) are enriched in low complexity. Polar residues-rich tracts occupy residues 364-377 (VGSP…TSQW) and 384-393 (APSSPSYENS). Composition is skewed to basic and acidic residues over residues 543–555 (IKTE…ENLH) and 561–576 (DDMK…DIKV). Lys544 participates in a covalent cross-link: Glycyl lysine isopeptide (Lys-Gly) (interchain with G-Cter in SUMO2). Ser565 is modified (phosphoserine). A Glycyl lysine isopeptide (Lys-Gly) (interchain with G-Cter in SUMO2) cross-link involves residue Lys575. Thr582 bears the Phosphothreonine mark. A phosphoserine mark is found at Ser583 and Ser584. The span at 593–605 (PEQKIEREKERRM) shows a compositional bias: basic and acidic residues. Positions 602–655 (ERRMANNARERLRVRDINEAFKELGRMCQLHLKSEKPQTKLLILHQAVAVILSL) constitute a bHLH domain. Glycyl lysine isopeptide (Lys-Gly) (interchain with G-Cter in SUMO2) cross-links involve residues Lys634 and Lys678. The interval 657-680 (QQVRERNLNPKAACLKRREEEKVS) is class A specific domain. A disordered region spans residues 675–707 (EEEKVSAASAEPPTTLPGTHPGLSETTNPMGHL). The span at 686-697 (PPTTLPGTHPGL) shows a compositional bias: low complexity. The segment covering 698–707 (SETTNPMGHL) has biased composition (polar residues).

Efficient DNA binding requires dimerization with another bHLH protein. Forms homo- or heterooligomers with myogenin, E12 and ITF2 proteins. Interacts with PTF1. Interacts with RUNX1T1. Interacts with NEUROD2. Interacts with BHLHA9. Isoform gamma is highly expressed in lung, kidney, spleen, and is expressed at reduced levels in heart, muscle, liver, pituitary, brain and the trigeminal ganglion. The expression of isoform alpha predominates over isoform gamma in the pituitary and the brain.

Its subcellular location is the nucleus. Transcriptional regulator. Involved in the initiation of neuronal differentiation. Activates transcription by binding to the E box (5'-CANNTG-3'). May be involved in the functional network that regulates the development of the GnRH axis. The chain is Transcription factor 12 (Tcf12) from Rattus norvegicus (Rat).